Here is a 318-residue protein sequence, read N- to C-terminus: MIEALKPLVLAAVVTLILGPPVLAFLRRLKAGQTVRSDGPRSHLAKAGTPTMGGVLFLIGLTVSTLVLAPPSPLTLSTLILTWGYALIGLVDDGLKVILHRPLGLMARQKLGGQVLLGLVAGVAAMLWLGRGSVIQVPVTGWHWDLGWYYPLLAALLLVATTNAVNLTDGLDGLAAGITLWVALAYGILALTLGQGELVTFAMALAGGCLGFLVYNFHPARVFMGDTGSLALGAAIGFLAIMTRTELVLPVLGGVYVLETLSVILQVVSFRLTGRRLFRMSPLHHHFELGGWPESRVVLFFWALAIIMALAGLYLLTI.

10 helical membrane passes run 5-25 (LKPL…VLAF), 50-70 (PTMG…VLAP), 71-91 (PSPL…IGLV), 115-135 (VLLG…GSVI), 139-159 (VTGW…LLLV), 173-193 (GLAA…ALTL), 198-218 (LVTF…YNFH), 222-242 (VFMG…LAIM), 248-268 (VLPV…LQVV), and 298-318 (VLFF…LLTI).

The protein belongs to the glycosyltransferase 4 family. MraY subfamily. The cofactor is Mg(2+).

It is found in the cell membrane. It carries out the reaction UDP-N-acetyl-alpha-D-muramoyl-L-alanyl-gamma-D-glutamyl-meso-2,6-diaminopimeloyl-D-alanyl-D-alanine + di-trans,octa-cis-undecaprenyl phosphate = di-trans,octa-cis-undecaprenyl diphospho-N-acetyl-alpha-D-muramoyl-L-alanyl-D-glutamyl-meso-2,6-diaminopimeloyl-D-alanyl-D-alanine + UMP. Its pathway is cell wall biogenesis; peptidoglycan biosynthesis. Functionally, catalyzes the initial step of the lipid cycle reactions in the biosynthesis of the cell wall peptidoglycan: transfers peptidoglycan precursor phospho-MurNAc-pentapeptide from UDP-MurNAc-pentapeptide onto the lipid carrier undecaprenyl phosphate, yielding undecaprenyl-pyrophosphoryl-MurNAc-pentapeptide, known as lipid I. The polypeptide is Phospho-N-acetylmuramoyl-pentapeptide-transferase (Moorella thermoacetica (strain ATCC 39073 / JCM 9320)).